Reading from the N-terminus, the 820-residue chain is DNA mismatch repair protein MutS (820 aa).

Residue 615–622 (GPNMAGKS) coordinates ATP.

Belongs to the DNA mismatch repair MutS family.

Its function is as follows. This protein is involved in the repair of mismatches in DNA. It is possible that it carries out the mismatch recognition step. This protein has a weak ATPase activity. This Anaplasma phagocytophilum (strain HZ) protein is DNA mismatch repair protein MutS.